The primary structure comprises 194 residues: Peptidyl-tRNA hydrolase (194 aa).

Y16 is a binding site for tRNA. H21 (proton acceptor) is an active-site residue. The tRNA site is built by F67, N69, and N115.

The protein belongs to the PTH family. Monomer.

It localises to the cytoplasm. It catalyses the reaction an N-acyl-L-alpha-aminoacyl-tRNA + H2O = an N-acyl-L-amino acid + a tRNA + H(+). Its function is as follows. Hydrolyzes ribosome-free peptidyl-tRNAs (with 1 or more amino acids incorporated), which drop off the ribosome during protein synthesis, or as a result of ribosome stalling. Catalyzes the release of premature peptidyl moieties from peptidyl-tRNA molecules trapped in stalled 50S ribosomal subunits, and thus maintains levels of free tRNAs and 50S ribosomes. This chain is Peptidyl-tRNA hydrolase, found in Sodalis glossinidius (strain morsitans).